The chain runs to 227 residues: Cytidylate kinase (227 aa).

Position 12-20 (12-20 (GPGGAGKGT)) interacts with ATP.

The protein belongs to the cytidylate kinase family. Type 1 subfamily.

The protein resides in the cytoplasm. The catalysed reaction is CMP + ATP = CDP + ADP. It catalyses the reaction dCMP + ATP = dCDP + ADP. This Klebsiella pneumoniae (strain 342) protein is Cytidylate kinase.